A 137-amino-acid chain; its full sequence is Ribonuclease P protein component (137 aa).

This sequence belongs to the RnpA family. As to quaternary structure, consists of a catalytic RNA component (M1 or rnpB) and a protein subunit.

It catalyses the reaction Endonucleolytic cleavage of RNA, removing 5'-extranucleotides from tRNA precursor.. Functionally, RNaseP catalyzes the removal of the 5'-leader sequence from pre-tRNA to produce the mature 5'-terminus. It can also cleave other RNA substrates such as 4.5S RNA. The protein component plays an auxiliary but essential role in vivo by binding to the 5'-leader sequence and broadening the substrate specificity of the ribozyme. This chain is Ribonuclease P protein component, found in Porphyromonas gingivalis (strain ATCC 33277 / DSM 20709 / CIP 103683 / JCM 12257 / NCTC 11834 / 2561).